The sequence spans 391 residues: Putative F-box protein At1g47730 (391 aa).

A compositionally biased stretch (basic and acidic residues) spans Met1 to Gln12. A disordered region spans residues Met1–Leu25. Positions Lys19 to Arg68 constitute an F-box domain.

This chain is Putative F-box protein At1g47730, found in Arabidopsis thaliana (Mouse-ear cress).